The chain runs to 77 residues: Small ribosomal subunit protein uS17 (77 aa).

Belongs to the universal ribosomal protein uS17 family. Part of the 30S ribosomal subunit.

In terms of biological role, one of the primary rRNA binding proteins, it binds specifically to the 5'-end of 16S ribosomal RNA. The protein is Small ribosomal subunit protein uS17 of Anaplasma marginale (strain St. Maries).